The chain runs to 1459 residues: Mediator of RNA polymerase II transcription subunit 14 (1459 aa).

Residues 1-37 are disordered; it reads MAPVQLDNHQLIPPGGGGGSSGGGGSSSGSASAPAPP. A compositionally biased stretch (gly residues) spans 14–27; sequence PGGGGGSSGGGGSS. An LXXLL motif 1 motif is present at residues 75–79; sequence LTDLL. The interaction with STAT2 stretch occupies residues 194–572; the sequence is KQATLHQLNQ…VPNKPTQLSY (379 aa). Positions 506 to 830 are interaction with SREBF1; sequence LGQQRCKQSI…TKGSSISIQW (325 aa). Phosphoserine occurs at positions 623 and 992. Residues 979 to 1171 are disordered; that stretch reads ARRRSVNEDD…NMPPPRKLPQ (193 aa). Composition is skewed to polar residues over residues 1029 to 1059 and 1097 to 1106; these read PPTSYHSTVNQSPSMMHTQSPGNLHAASSPS and DPSSPYTMVS. A phosphoserine mark is found at Ser-1117, Ser-1124, Ser-1133, Ser-1141, and Ser-1149. Residues 1152–1161 are compositionally biased toward polar residues; that stretch reads AGTSSQTMPT. The LXXLL motif 2 motif lies at 1187–1191; the sequence is LNILL.

Belongs to the Mediator complex subunit 14 family. In terms of assembly, component of the Mediator complex, which is composed of MED1, MED4, MED6, MED7, MED8, MED9, MED10, MED11, MED12, MED13, MED13L, MED14, MED15, MED16, MED17, MED18, MED19, MED20, MED21, MED22, MED23, MED24, MED25, MED26, MED27, MED29, MED30, MED31, CCNC, CDK8 and CDC2L6/CDK11. The MED12, MED13, CCNC and CDK8 subunits form a distinct module termed the CDK8 module. Mediator containing the CDK8 module is less active than Mediator lacking this module in supporting transcriptional activation. Individual preparations of the Mediator complex lacking one or more distinct subunits have been variously termed ARC, CRSP, DRIP, PC2, SMCC and TRAP. Interacts with AR, ESR1, SREBF1 and STAT2. Interacts with GATA1.

The protein localises to the nucleus. Component of the Mediator complex, a coactivator involved in the regulated transcription of nearly all RNA polymerase II-dependent genes. Mediator functions as a bridge to convey information from gene-specific regulatory proteins to the basal RNA polymerase II transcription machinery. Mediator is recruited to promoters by direct interactions with regulatory proteins and serves as a scaffold for the assembly of a functional preinitiation complex with RNA polymerase II and the general transcription factors. This chain is Mediator of RNA polymerase II transcription subunit 14 (Med14), found in Mus musculus (Mouse).